The primary structure comprises 80 residues: Small ribosomal subunit protein bS16c (80 aa).

The protein belongs to the bacterial ribosomal protein bS16 family.

The protein resides in the plastid. Its subcellular location is the chloroplast. The polypeptide is Small ribosomal subunit protein bS16c (Lotus japonicus (Lotus corniculatus var. japonicus)).